Here is a 990-residue protein sequence, read N- to C-terminus: MLRFQRTVPRVAIRRLANVYSEGAVLHGYKVRRAQEIPEMRMAAVELEHEMTGARHLHLEREDQNNVFSVGFRTPPPDATGVPHILEHTTLCGSQKYPVRDPFFKMLNRSLANFMNAMTAHDHTFYPFATTNQKDFANLRDLYLDATLRPLLRHADFLQEGWRLEHRDVGDASSELVFKGVVYNEMKGQVSNADYYFWIRFQEAIYPALHNSGGDPEHITDLSYEDLVAFHQNHYHPSNAKTFTYGNFPLRDTLRKLDDEFRGFGRRAIPQMHEKPLQLREAVSVEEPCQIDPMLPADKQCRTSMTWICGNPNDVYETFLLKILGSLLFDGHSSAFYKKLVEETGLAYELSVNTGVESQTAANFLTVGVQGCTDVGQVHKVIMETFTALLAQPFEKHRVEAILHQLELSKKDQKSDFGLQLLYGILPGWVNNTDPFDLLSLNSALQRFRADWDREGDGLFQRLLNKYVIGKPSFTFTMVGSSDFNQVKDQNEQSKLKAKVSSLTESDKEVIYKRGLHLQELQNSEQDLSKLPTLTTADIPHSSGHYFVSRDGPITTRQTDTNGITYIRMKRPLKGAIPYDAYPYIPLYSDGLMNIGTLLEDASAIEEQIRLHTGGISVSIGVHPNVETRLSELYLEISACALNSKTQYVFDIINKIMNETALSVRSEKMKVLIRAAASSFTSYAAENGHDLARLHTGAHFSQTQAIMEQTAGIEQVRHMNNLMSIIEKEAEFNTVLQNLEAMHRKIFVADGLEVMITTDNRQTSDVVKDQALKFIAGVQQSAGAESWLPEKYSRRALEKPYPALLQFPFQVHYTAQSTQGVSYTHPDGAHLQVLASLLTFKHLHREVREKGGAYGGGATYNATDGIFNFFSYRDPQPVRSLNIFRNAGKYVLNEARWTADDLNEAKLSIFQRVDAPISPSSEGLLQFRHNISDEQRDRRRQQLLKSTLDDVRRVADIYLVQPSPSQHMSAVVGPELPREVWSSQWPVIKV.

The transit peptide at 1–56 (MLRFQRTVPRVAIRRLANVYSEGAVLHGYKVRRAQEIPEMRMAAVELEHEMTGARH) directs the protein to the mitochondrion. His-84 lines the Zn(2+) pocket. Glu-87 acts as the Proton acceptor in catalysis. Position 88 (His-88) interacts with Zn(2+). The active site involves Glu-160. Glu-185 is a Zn(2+) binding site.

Belongs to the peptidase M16 family. PreP subfamily. Monomer and homodimer; homodimerization is induced by binding of the substrate. Zn(2+) is required as a cofactor.

The protein localises to the mitochondrion intermembrane space. The protein resides in the mitochondrion matrix. Degrades mitochondrial transit peptides after their cleavage in the intermembrane space or in the matrix, and presequence peptides; clearance of these peptides is required to keep the presequence processing machinery running. Preferentially cleaves the N-terminal side of paired basic amino acid residues. Also degrades other unstructured peptides. May function as an ATP-dependent peptidase as opposed to a metalloendopeptidase. This chain is Presequence protease, mitochondrial (CYM1), found in Eremothecium gossypii (strain ATCC 10895 / CBS 109.51 / FGSC 9923 / NRRL Y-1056) (Yeast).